We begin with the raw amino-acid sequence, 622 residues long: Chaperone protein HscA homolog (622 aa).

This sequence belongs to the heat shock protein 70 family.

Chaperone involved in the maturation of iron-sulfur cluster-containing proteins. Has a low intrinsic ATPase activity which is markedly stimulated by HscB. The protein is Chaperone protein HscA homolog of Aromatoleum aromaticum (strain DSM 19018 / LMG 30748 / EbN1) (Azoarcus sp. (strain EbN1)).